The primary structure comprises 350 residues: Ribosome production factor 2 homolog (350 aa).

Residues lysine 28 to alanine 266 enclose the Brix domain. Residues proline 192–glycine 202 are compositionally biased toward polar residues. Disordered stretches follow at residues proline 192–proline 219 and methionine 301–glycine 350.

The protein belongs to the RPF2 family. In terms of assembly, component of a hexameric 5S RNP precursor complex, composed of 5S RNA, RRS1, RPF2, RPL5, RPL11 and SYO1; this complex acts as a precursor for ribosome assembly.

It is found in the nucleus. It localises to the nucleolus. Functionally, involved in ribosomal large subunit assembly. In Chaetomium thermophilum (strain DSM 1495 / CBS 144.50 / IMI 039719) (Thermochaetoides thermophila), this protein is Ribosome production factor 2 homolog.